The chain runs to 520 residues: UDP-N-acetylmuramoyl-L-alanyl-D-glutamate--2,6-diaminopimelate ligase (520 aa).

L48 contributes to the UDP-N-acetyl-alpha-D-muramoyl-L-alanyl-D-glutamate binding site. 134–140 (GTSGKTT) is a binding site for ATP. UDP-N-acetyl-alpha-D-muramoyl-L-alanyl-D-glutamate-binding positions include 176–177 (TT), S203, and R211. K243 is subject to N6-carboxylysine. Meso-2,6-diaminopimelate is bound by residues R405, 429-432 (DNPR), G483, and E487. The Meso-diaminopimelate recognition motif signature appears at 429–432 (DNPR).

The protein belongs to the MurCDEF family. MurE subfamily. The cofactor is Mg(2+). Carboxylation is probably crucial for Mg(2+) binding and, consequently, for the gamma-phosphate positioning of ATP.

The protein localises to the cytoplasm. It carries out the reaction UDP-N-acetyl-alpha-D-muramoyl-L-alanyl-D-glutamate + meso-2,6-diaminopimelate + ATP = UDP-N-acetyl-alpha-D-muramoyl-L-alanyl-gamma-D-glutamyl-meso-2,6-diaminopimelate + ADP + phosphate + H(+). Its pathway is cell wall biogenesis; peptidoglycan biosynthesis. Catalyzes the addition of meso-diaminopimelic acid to the nucleotide precursor UDP-N-acetylmuramoyl-L-alanyl-D-glutamate (UMAG) in the biosynthesis of bacterial cell-wall peptidoglycan. In Mycobacterium avium (strain 104), this protein is UDP-N-acetylmuramoyl-L-alanyl-D-glutamate--2,6-diaminopimelate ligase.